The sequence spans 280 residues: Octanoyl-[GcvH]:protein N-octanoyltransferase (280 aa).

The region spanning glutamine 40–asparagine 245 is the BPL/LPL catalytic domain. The active-site Acyl-thioester intermediate is the cysteine 144.

Belongs to the octanoyltransferase LipL family.

It carries out the reaction N(6)-octanoyl-L-lysyl-[glycine-cleavage complex H protein] + L-lysyl-[lipoyl-carrier protein] = N(6)-octanoyl-L-lysyl-[lipoyl-carrier protein] + L-lysyl-[glycine-cleavage complex H protein]. It participates in protein modification; protein lipoylation via endogenous pathway; protein N(6)-(lipoyl)lysine from octanoyl-[acyl-carrier-protein]. Its function is as follows. Catalyzes the amidotransfer (transamidation) of the octanoyl moiety from octanoyl-GcvH to the lipoyl domain of the E2 subunit of lipoate-dependent enzymes. The chain is Octanoyl-[GcvH]:protein N-octanoyltransferase from Exiguobacterium sp. (strain ATCC BAA-1283 / AT1b).